We begin with the raw amino-acid sequence, 202 residues long: Large ribosomal subunit protein bL25 (202 aa).

It belongs to the bacterial ribosomal protein bL25 family. CTC subfamily. Part of the 50S ribosomal subunit; part of the 5S rRNA/L5/L18/L25 subcomplex. Contacts the 5S rRNA. Binds to the 5S rRNA independently of L5 and L18.

This is one of the proteins that binds to the 5S RNA in the ribosome where it forms part of the central protuberance. The protein is Large ribosomal subunit protein bL25 of Burkholderia ambifaria (strain MC40-6).